A 159-amino-acid polypeptide reads, in one-letter code: Phosphopantetheine adenylyltransferase (159 aa).

A substrate-binding site is contributed by T10. Residues 10 to 11 (TF) and H18 contribute to the ATP site. Substrate-binding residues include K42, L74, and R88. ATP-binding positions include 89-91 (GLR), E99, and 124-130 (NSFISST).

Belongs to the bacterial CoaD family. Homohexamer. It depends on Mg(2+) as a cofactor.

The protein localises to the cytoplasm. It carries out the reaction (R)-4'-phosphopantetheine + ATP + H(+) = 3'-dephospho-CoA + diphosphate. The protein operates within cofactor biosynthesis; coenzyme A biosynthesis; CoA from (R)-pantothenate: step 4/5. Functionally, reversibly transfers an adenylyl group from ATP to 4'-phosphopantetheine, yielding dephospho-CoA (dPCoA) and pyrophosphate. In Shewanella halifaxensis (strain HAW-EB4), this protein is Phosphopantetheine adenylyltransferase.